We begin with the raw amino-acid sequence, 187 residues long: UPF0200 protein MM_1313 (187 aa).

9–16 contributes to the ATP binding site; the sequence is GMPASGKS.

Belongs to the UPF0200 family.

This Methanosarcina mazei (strain ATCC BAA-159 / DSM 3647 / Goe1 / Go1 / JCM 11833 / OCM 88) (Methanosarcina frisia) protein is UPF0200 protein MM_1313.